We begin with the raw amino-acid sequence, 315 residues long: UDP-3-O-acyl-N-acetylglucosamine deacetylase (315 aa).

Residues His-78, His-235, and Asp-239 each coordinate Zn(2+). The active-site Proton donor is the His-262.

Belongs to the LpxC family. Requires Zn(2+) as cofactor.

It carries out the reaction a UDP-3-O-[(3R)-3-hydroxyacyl]-N-acetyl-alpha-D-glucosamine + H2O = a UDP-3-O-[(3R)-3-hydroxyacyl]-alpha-D-glucosamine + acetate. It functions in the pathway glycolipid biosynthesis; lipid IV(A) biosynthesis; lipid IV(A) from (3R)-3-hydroxytetradecanoyl-[acyl-carrier-protein] and UDP-N-acetyl-alpha-D-glucosamine: step 2/6. Catalyzes the hydrolysis of UDP-3-O-myristoyl-N-acetylglucosamine to form UDP-3-O-myristoylglucosamine and acetate, the committed step in lipid A biosynthesis. This chain is UDP-3-O-acyl-N-acetylglucosamine deacetylase, found in Syntrophus aciditrophicus (strain SB).